The chain runs to 56 residues: uncharacterized protein (56 aa).

Residues 33 to 53 form a helical membrane-spanning segment; the sequence is INIIYLAIMKIIMNIIMMIMI.

Its subcellular location is the host membrane. This is an uncharacterized protein from Bos taurus (Bovine).